Reading from the N-terminus, the 192-residue chain is A-type ATP synthase subunit E (192 aa).

This sequence belongs to the V-ATPase E subunit family. In terms of assembly, has multiple subunits with at least A(3), B(3), C, D, E, F, H, I and proteolipid K(x).

It is found in the cell membrane. Functionally, component of the A-type ATP synthase that produces ATP from ADP in the presence of a proton gradient across the membrane. The sequence is that of A-type ATP synthase subunit E from Metallosphaera sedula (strain ATCC 51363 / DSM 5348 / JCM 9185 / NBRC 15509 / TH2).